The chain runs to 556 residues: (6-4)DNA photolyase (556 aa).

Residues 24–162 (SGSLIWFRKG…EVFSPVSHTL (139 aa)) form the Photolyase/cryptochrome alpha/beta domain. Position 262 (glutamate 262) interacts with phosphate. FAD is bound by residues lysine 263, 276 to 280 (TTVMS), 317 to 321 (QLLWR), 380 to 383 (WMHH), arginine 386, 415 to 417 (DSD), and asparagine 421. Position 320 (tryptophan 320) interacts with DNA. The interval 382–387 (HHLARH) is interaction with DNA. Tryptophan 427 lines the DNA pocket. The tract at residues 534–556 (LRRKLQKDEHEESKIRNQRPKLK) is disordered. Positions 539 to 548 (QKDEHEESKI) are enriched in basic and acidic residues.

This sequence belongs to the DNA photolyase class-1 family. FAD is required as a cofactor. As to expression, expressed in siliques, flowers and leaves. Not detected in roots.

The enzyme catalyses (6-4) photoproduct (in DNA) = 2 pyrimidine residues (in DNA).. In terms of biological role, involved in repair of UV radiation-induced DNA damage. Catalyzes the photoreactivation of pyrimidine [6-4] pyrimidone photoproduct (6-4 products). Binds specifically to DNA containing 6-4 products and repairs these lesions in a visible light-dependent manner. Not required for repair of cyclobutane pyrimidine dimer (CPD). This is (6-4)DNA photolyase (UVR3) from Arabidopsis thaliana (Mouse-ear cress).